Here is a 189-residue protein sequence, read N- to C-terminus: Elongation factor P (189 aa).

K34 is modified (N6-(3,6-diaminohexanoyl)-5-hydroxylysine).

This sequence belongs to the elongation factor P family. Post-translationally, may be beta-lysylated on the epsilon-amino group of Lys-34 by the combined action of EpmA and EpmB, and then hydroxylated on the C5 position of the same residue by EpmC (if this protein is present). Lysylation is critical for the stimulatory effect of EF-P on peptide-bond formation. The lysylation moiety may extend toward the peptidyltransferase center and stabilize the terminal 3-CCA end of the tRNA. Hydroxylation of the C5 position on Lys-34 may allow additional potential stabilizing hydrogen-bond interactions with the P-tRNA.

Its subcellular location is the cytoplasm. It participates in protein biosynthesis; polypeptide chain elongation. Involved in peptide bond synthesis. Alleviates ribosome stalling that occurs when 3 or more consecutive Pro residues or the sequence PPG is present in a protein, possibly by augmenting the peptidyl transferase activity of the ribosome. Modification of Lys-34 is required for alleviation. This Francisella philomiragia subsp. philomiragia (strain ATCC 25017 / CCUG 19701 / FSC 153 / O#319-036) protein is Elongation factor P.